Consider the following 286-residue polypeptide: Probable endonuclease 4 (286 aa).

The Zn(2+) site is built by His67, His107, Glu144, Asp178, His181, His215, Asp228, His230, and Glu260.

Belongs to the AP endonuclease 2 family. It depends on Zn(2+) as a cofactor.

It catalyses the reaction Endonucleolytic cleavage to 5'-phosphooligonucleotide end-products.. In terms of biological role, endonuclease IV plays a role in DNA repair. It cleaves phosphodiester bonds at apurinic or apyrimidinic (AP) sites, generating a 3'-hydroxyl group and a 5'-terminal sugar phosphate. This is Probable endonuclease 4 from Chloroflexus aggregans (strain MD-66 / DSM 9485).